Reading from the N-terminus, the 166-residue chain is NAD(P)H-quinone oxidoreductase subunit I, chloroplastic (166 aa).

4Fe-4S ferredoxin-type domains are found at residues 55 to 84 and 95 to 124; these read GRIHFEFDKCIACEVCVRVCPIDLPVVDWK and LNYSIDFGICIFCGNCVEYCPTNCLSMTEE. Positions 64, 67, 70, 74, 104, 107, 110, and 114 each coordinate [4Fe-4S] cluster.

The protein belongs to the complex I 23 kDa subunit family. As to quaternary structure, NDH is composed of at least 16 different subunits, 5 of which are encoded in the nucleus. [4Fe-4S] cluster serves as cofactor.

It localises to the plastid. It is found in the chloroplast thylakoid membrane. The enzyme catalyses a plastoquinone + NADH + (n+1) H(+)(in) = a plastoquinol + NAD(+) + n H(+)(out). It carries out the reaction a plastoquinone + NADPH + (n+1) H(+)(in) = a plastoquinol + NADP(+) + n H(+)(out). Its function is as follows. NDH shuttles electrons from NAD(P)H:plastoquinone, via FMN and iron-sulfur (Fe-S) centers, to quinones in the photosynthetic chain and possibly in a chloroplast respiratory chain. The immediate electron acceptor for the enzyme in this species is believed to be plastoquinone. Couples the redox reaction to proton translocation, and thus conserves the redox energy in a proton gradient. The polypeptide is NAD(P)H-quinone oxidoreductase subunit I, chloroplastic (Polymnia canadensis (White-flowered leaf-cup)).